Here is a 477-residue protein sequence, read N- to C-terminus: Bifunctional protein HldE (477 aa).

The tract at residues Met1–Thr321 is ribokinase. ATP is bound at residue Asn198–Glu201. Asp266 is a catalytic residue. A cytidylyltransferase region spans residues Phe348–Val477.

In the N-terminal section; belongs to the carbohydrate kinase PfkB family. It in the C-terminal section; belongs to the cytidylyltransferase family. Homodimer.

The enzyme catalyses D-glycero-beta-D-manno-heptose 7-phosphate + ATP = D-glycero-beta-D-manno-heptose 1,7-bisphosphate + ADP + H(+). It carries out the reaction D-glycero-beta-D-manno-heptose 1-phosphate + ATP + H(+) = ADP-D-glycero-beta-D-manno-heptose + diphosphate. The protein operates within nucleotide-sugar biosynthesis; ADP-L-glycero-beta-D-manno-heptose biosynthesis; ADP-L-glycero-beta-D-manno-heptose from D-glycero-beta-D-manno-heptose 7-phosphate: step 1/4. It functions in the pathway nucleotide-sugar biosynthesis; ADP-L-glycero-beta-D-manno-heptose biosynthesis; ADP-L-glycero-beta-D-manno-heptose from D-glycero-beta-D-manno-heptose 7-phosphate: step 3/4. Catalyzes the phosphorylation of D-glycero-D-manno-heptose 7-phosphate at the C-1 position to selectively form D-glycero-beta-D-manno-heptose-1,7-bisphosphate. In terms of biological role, catalyzes the ADP transfer from ATP to D-glycero-beta-D-manno-heptose 1-phosphate, yielding ADP-D-glycero-beta-D-manno-heptose. This Sulfurimonas denitrificans (strain ATCC 33889 / DSM 1251) (Thiomicrospira denitrificans (strain ATCC 33889 / DSM 1251)) protein is Bifunctional protein HldE.